A 554-amino-acid chain; its full sequence is Formate--tetrahydrofolate ligase (554 aa).

Position 67–74 (67–74 (TPTGEGKT)) interacts with ATP.

The protein belongs to the formate--tetrahydrofolate ligase family.

It carries out the reaction (6S)-5,6,7,8-tetrahydrofolate + formate + ATP = (6R)-10-formyltetrahydrofolate + ADP + phosphate. It functions in the pathway one-carbon metabolism; tetrahydrofolate interconversion. The chain is Formate--tetrahydrofolate ligase from Finegoldia magna (strain ATCC 29328 / DSM 20472 / WAL 2508) (Peptostreptococcus magnus).